Here is a 632-residue protein sequence, read N- to C-terminus: Golgin subfamily A member 8O (632 aa).

The interval M1–E76 is disordered. Residues T38–G50 are compositionally biased toward polar residues. 2 coiled-coil regions span residues V85–Y150 and E209–A421. 3 disordered regions span residues P423–S452, D505–E524, and N552–G612. Residues H427–P440 are compositionally biased toward basic and acidic residues. Residues L508–G520 are compositionally biased toward gly residues. Over residues A569–E578 the composition is skewed to basic and acidic residues.

Belongs to the GOLGA6 family.

This is Golgin subfamily A member 8O (GOLGA8O) from Homo sapiens (Human).